Reading from the N-terminus, the 253-residue chain is 5'-nucleotidase SurE (253 aa).

Asp8, Asp9, Ser39, and Asn97 together coordinate a divalent metal cation.

Belongs to the SurE nucleotidase family. A divalent metal cation serves as cofactor.

The protein localises to the cytoplasm. The enzyme catalyses a ribonucleoside 5'-phosphate + H2O = a ribonucleoside + phosphate. Its function is as follows. Nucleotidase that shows phosphatase activity on nucleoside 5'-monophosphates. The protein is 5'-nucleotidase SurE of Aeromonas hydrophila subsp. hydrophila (strain ATCC 7966 / DSM 30187 / BCRC 13018 / CCUG 14551 / JCM 1027 / KCTC 2358 / NCIMB 9240 / NCTC 8049).